The primary structure comprises 224 residues: 7-cyano-7-deazaguanine synthase (224 aa).

Residue 10–20 (FSGGQDSTTCL) coordinates ATP. Positions 193, 201, 204, and 207 each coordinate Zn(2+).

It belongs to the QueC family. It depends on Zn(2+) as a cofactor.

The catalysed reaction is 7-carboxy-7-deazaguanine + NH4(+) + ATP = 7-cyano-7-deazaguanine + ADP + phosphate + H2O + H(+). It participates in purine metabolism; 7-cyano-7-deazaguanine biosynthesis. Its function is as follows. Catalyzes the ATP-dependent conversion of 7-carboxy-7-deazaguanine (CDG) to 7-cyano-7-deazaguanine (preQ(0)). The chain is 7-cyano-7-deazaguanine synthase from Neisseria gonorrhoeae (strain ATCC 700825 / FA 1090).